Consider the following 816-residue polypeptide: Probable transcriptional regulator SLK2 (816 aa).

Disordered stretches follow at residues 133–153 (HDPSVQLGGSSATSLPTSQTN) and 166–189 (SFFQDPNNLTQARKKPRLDSKQDD). 2 stretches are compositionally biased toward polar residues: residues 139 to 153 (LGGSSATSLPTSQTN) and 166 to 176 (SFFQDPNNLTQ). The interval 307–554 (PSESSIVYWR…DQKVGPIEAL (248 aa)) is dimerization. The short motif at 316–330 (RKFVTEYFSPRAKKR) is the Nuclear localization signal element. 2 stretches are compositionally biased toward polar residues: residues 644-662 (IQQEPSRNRSASPSYQGTS) and 672-711 (PSISGVSSHLSPQRQMPSSSYNGSTQQYHQQPPSCSSGNQ). The segment at 644 to 711 (IQQEPSRNRS…QPPSCSSGNQ (68 aa)) is disordered.

The protein belongs to the adn1/SEU family. In terms of assembly, forms corepressor complexes with LUH; LUH is the transcription repressor subunit and SLK2 the specific DNA-binding adapters. As to expression, expressed in young flower meristems, ovules and the carpel margin meristem.

The protein localises to the nucleus. In terms of biological role, probable transcription regulator that functions in the development of the carpel margin meristem similarly to SEUSS (SEU). In association with SEU, supports organ development from meristematic regions by facilitating auxin response and thus organ initiation, and by sustaining meristematic potential through the maintenance of PHABULOSA expression. DNA-binding adapter subunit of the SEU-SLK2 transcriptional corepressor of abiotic stress (e.g. salt and osmotic stress) response genes. This chain is Probable transcriptional regulator SLK2 (SLK2), found in Arabidopsis thaliana (Mouse-ear cress).